Reading from the N-terminus, the 244-residue chain is ATP synthase subunit a, chloroplastic (244 aa).

The next 5 membrane-spanning stretches (helical) occupy residues 35–55 (QVLI…VIAV), 92–112 (VPFI…GALL), 131–151 (INTT…AGLS), 196–216 (LVVV…VMFL), and 217–237 (GLFI…AYIG).

This sequence belongs to the ATPase A chain family. F-type ATPases have 2 components, CF(1) - the catalytic core - and CF(0) - the membrane proton channel. CF(1) has five subunits: alpha(3), beta(3), gamma(1), delta(1), epsilon(1). CF(0) has four main subunits: a, b, b' and c.

Its subcellular location is the plastid. The protein resides in the chloroplast thylakoid membrane. Key component of the proton channel; it plays a direct role in the translocation of protons across the membrane. The chain is ATP synthase subunit a, chloroplastic from Gossypium barbadense (Sea Island cotton).